A 186-amino-acid polypeptide reads, in one-letter code: Casparian strip membrane protein 5 (186 aa).

The Cytoplasmic portion of the chain corresponds to 1 to 23 (MEHGEISSKAPLVAPVAAGVNRA). Residues 24-44 (VAVVDTFLRFIAIIGTIGSAI) traverse the membrane as a helical segment. Residues 45–73 (AMGTTNETLPFFTQFIQFEAKYSDLPSFT) are Extracellular-facing. Asn-50 carries an N-linked (GlcNAc...) asparagine glycan. Residues 74-94 (FFVAANAVVCTYLVLSIPLSI) traverse the membrane as a helical segment. Residues 95-106 (VHILRPRARYSR) lie on the Cytoplasmic side of the membrane. Residues 107-127 (LFLVFFDTAMLALLTAGASAA) traverse the membrane as a helical segment. The Extracellular segment spans residues 128–160 (AAIVYLAHKGNVRANWFSICQQFDSFCERISGS). A helical transmembrane segment spans residues 161-181 (LIGSFAAMVLLVVLITLSAFA). Residues 182–186 (LARRH) lie on the Cytoplasmic side of the membrane.

It belongs to the Casparian strip membrane proteins (CASP) family. In terms of assembly, homodimer and heterodimers.

The protein localises to the cell membrane. In terms of biological role, regulates membrane-cell wall junctions and localized cell wall deposition. Required for establishment of the Casparian strip membrane domain (CSD) and the subsequent formation of Casparian strips, a cell wall modification of the root endodermis that determines an apoplastic barrier between the intraorganismal apoplasm and the extraorganismal apoplasm and prevents lateral diffusion. This is Casparian strip membrane protein 5 from Oryza sativa subsp. japonica (Rice).